The sequence spans 874 residues: Alanine--tRNA ligase (874 aa).

The Zn(2+) site is built by His-563, His-567, Cys-665, and His-669.

The protein belongs to the class-II aminoacyl-tRNA synthetase family. Zn(2+) serves as cofactor.

It localises to the cytoplasm. It catalyses the reaction tRNA(Ala) + L-alanine + ATP = L-alanyl-tRNA(Ala) + AMP + diphosphate. Functionally, catalyzes the attachment of alanine to tRNA(Ala) in a two-step reaction: alanine is first activated by ATP to form Ala-AMP and then transferred to the acceptor end of tRNA(Ala). Also edits incorrectly charged Ser-tRNA(Ala) and Gly-tRNA(Ala) via its editing domain. The sequence is that of Alanine--tRNA ligase from Histophilus somni (strain 129Pt) (Haemophilus somnus).